The sequence spans 429 residues: MLRLASLKFGRLFRYAKVLFAASLLVVMLLNTHSLLSSFQRNELTDRRFLSLNKCPACFGTSWCRKFMNGQLSFEGWGRLRLLDFFNVKNVHFAQYGEPREGSRRVVLKRLGSNHELSELDQRICKKATGRPRCDLVQAMYKTDFARLNGDVRLLTPDVVEGWSDLVHCPSQRLLDRLVRRYAETKDSGSFLLRNLKDTERMQLLLTLAFNPEPLVLQSFPSDEGWPFAKYLGACGRMVAVNYVGEELWSYFNAPWEKRVDLAWQLMEIAEQLTNNDFDFALYLLDVSFDNFAVGPRDGKVIIVDAENVLVADKKLIKQNKPENWDVWYESKFDDCDKEACLSFSKEILCSRATVDHNYYAICQNLLSRHATWRGTSGGLLHDPPAEIAKDGRLEALLDECANPKKRYGRFKSAKELREYLAQLSNNAR.

The N-terminal stretch at 1-34 is a signal peptide; it reads MLRLASLKFGRLFRYAKVLFAASLLVVMLLNTHS.

This sequence belongs to the DIPK family.

The protein localises to the cytoplasmic vesicle. It localises to the COPI-coated vesicle. It is found in the golgi apparatus. Its subcellular location is the secreted. Functionally, may play a role in cardiomyocyte proliferation through paracrine signaling and activation of the PPI3K-AKT-CDK7 signaling cascade. The sequence is that of Divergent protein kinase domain 2A (dipk2a) from Xenopus tropicalis (Western clawed frog).